The following is an 800-amino-acid chain: Signaling protein YkoW (800 aa).

The next 7 membrane-spanning stretches (helical) occupy residues 5–27 (VTYN…YISL), 44–66 (WLIG…GMMA), 76–98 (EFMP…LYFV), 103–125 (LTYY…MHYI), 135–157 (IIYE…FVSL), 178–200 (VSSI…AATF), and 215–237 (TFHW…LFSS). The 195-residue stretch at 7–201 (YNTTLICLSI…YTGMLAATFH (195 aa)) folds into the MHYT domain. One can recognise a PAS domain in the interval 255 to 319 (QRFQSLIVHN…FEQVKKDKQA (65 aa)). Residues 402–536 (YNTVVFFLDL…NKSKYRYYSF (135 aa)) enclose the GGDEF domain. The 254-residue stretch at 545-798 (KLNQEMVLRE…QFEQFIIEQP (254 aa)) folds into the EAL domain.

Its subcellular location is the cell membrane. Probable signaling protein whose physiological role is not yet known. In Bacillus subtilis (strain 168), this protein is Signaling protein YkoW (ykoW).